A 977-amino-acid chain; its full sequence is Glycine dehydrogenase (decarboxylating) (977 aa).

Lysine 702 carries the post-translational modification N6-(pyridoxal phosphate)lysine.

Belongs to the GcvP family. In terms of assembly, the glycine cleavage system is composed of four proteins: P, T, L and H. The cofactor is pyridoxal 5'-phosphate.

It carries out the reaction N(6)-[(R)-lipoyl]-L-lysyl-[glycine-cleavage complex H protein] + glycine + H(+) = N(6)-[(R)-S(8)-aminomethyldihydrolipoyl]-L-lysyl-[glycine-cleavage complex H protein] + CO2. Functionally, the glycine cleavage system catalyzes the degradation of glycine. The P protein binds the alpha-amino group of glycine through its pyridoxal phosphate cofactor; CO(2) is released and the remaining methylamine moiety is then transferred to the lipoamide cofactor of the H protein. This Xanthomonas axonopodis pv. citri (strain 306) protein is Glycine dehydrogenase (decarboxylating).